Reading from the N-terminus, the 204-residue chain is MIGKLSGKADSQGDDYVIIDVNGVGYLVYASGKTLDKLVEGEFYKLFIETHVREEHIHLYGFLTLEEKNFFNLLQSVNGIGTRMALSILSNLTPDDIQIAVNNEDKNIFKAISGVGAKLAERIVLELKDKVTKISSSSAIKDSLNIKNITPVTSNEVMKALINLGFSRFEAQNVVQGIITQNPKISIDELIKTALKNRNSKFFS.

Positions 1–63 (MIGKLSGKAD…EEHIHLYGFL (63 aa)) are domain I. Residues 64-142 (TLEEKNFFNL…KISSSSAIKD (79 aa)) are domain II. The tract at residues 143 to 153 (SLNIKNITPVT) is flexible linker. Positions 153–204 (TSNEVMKALINLGFSRFEAQNVVQGIITQNPKISIDELIKTALKNRNSKFFS) are domain III.

It belongs to the RuvA family. In terms of assembly, homotetramer. Forms an RuvA(8)-RuvB(12)-Holliday junction (HJ) complex. HJ DNA is sandwiched between 2 RuvA tetramers; dsDNA enters through RuvA and exits via RuvB. An RuvB hexamer assembles on each DNA strand where it exits the tetramer. Each RuvB hexamer is contacted by two RuvA subunits (via domain III) on 2 adjacent RuvB subunits; this complex drives branch migration. In the full resolvosome a probable DNA-RuvA(4)-RuvB(12)-RuvC(2) complex forms which resolves the HJ.

Its subcellular location is the cytoplasm. In terms of biological role, the RuvA-RuvB-RuvC complex processes Holliday junction (HJ) DNA during genetic recombination and DNA repair, while the RuvA-RuvB complex plays an important role in the rescue of blocked DNA replication forks via replication fork reversal (RFR). RuvA specifically binds to HJ cruciform DNA, conferring on it an open structure. The RuvB hexamer acts as an ATP-dependent pump, pulling dsDNA into and through the RuvAB complex. HJ branch migration allows RuvC to scan DNA until it finds its consensus sequence, where it cleaves and resolves the cruciform DNA. The sequence is that of Holliday junction branch migration complex subunit RuvA from Rickettsia canadensis (strain McKiel).